The sequence spans 74 residues: Neuropeptide-like protein 33 (74 aa).

A signal peptide spans 1–21 (MISTSLLLVVLLFAILAIVDA). The residue at position 72 (Tyr72) is a Tyrosine amide.

This sequence belongs to the YARP (YGGW-amide related peptide) family. As to expression, expressed in hypoderm.

The protein resides in the secreted. Functionally, may have antifungic activity against D.coniospora. The sequence is that of Neuropeptide-like protein 33 (nlp-33) from Caenorhabditis elegans.